Reading from the N-terminus, the 235-residue chain is tRNA pseudouridine synthase B (235 aa).

Catalysis depends on aspartate 45, which acts as the Nucleophile.

The protein belongs to the pseudouridine synthase TruB family. Type 1 subfamily.

It catalyses the reaction uridine(55) in tRNA = pseudouridine(55) in tRNA. In terms of biological role, responsible for synthesis of pseudouridine from uracil-55 in the psi GC loop of transfer RNAs. This chain is tRNA pseudouridine synthase B, found in Chlamydia pneumoniae (Chlamydophila pneumoniae).